A 76-amino-acid chain; its full sequence is Acyl carrier protein (76 aa).

One can recognise a Carrier domain in the interval 1–76; the sequence is MSLEEKVKNI…DVIEYIKAHT (76 aa). The residue at position 36 (Ser-36) is an O-(pantetheine 4'-phosphoryl)serine.

This sequence belongs to the acyl carrier protein (ACP) family. 4'-phosphopantetheine is transferred from CoA to a specific serine of apo-ACP by AcpS. This modification is essential for activity because fatty acids are bound in thioester linkage to the sulfhydryl of the prosthetic group.

It localises to the cytoplasm. It functions in the pathway lipid metabolism; fatty acid biosynthesis. Carrier of the growing fatty acid chain in fatty acid biosynthesis. The protein is Acyl carrier protein of Desulfatibacillum aliphaticivorans.